The sequence spans 561 residues: Dihydroxy-acid dehydratase (561 aa).

C50 is a binding site for [2Fe-2S] cluster. D82 contributes to the Mg(2+) binding site. C123 provides a ligand contact to [2Fe-2S] cluster. Residues D124 and K125 each contribute to the Mg(2+) site. K125 is subject to N6-carboxylysine. C195 contacts [2Fe-2S] cluster. E447 serves as a coordination point for Mg(2+). S473 serves as the catalytic Proton acceptor.

The protein belongs to the IlvD/Edd family. In terms of assembly, homodimer. [2Fe-2S] cluster is required as a cofactor. It depends on Mg(2+) as a cofactor.

The enzyme catalyses (2R)-2,3-dihydroxy-3-methylbutanoate = 3-methyl-2-oxobutanoate + H2O. The catalysed reaction is (2R,3R)-2,3-dihydroxy-3-methylpentanoate = (S)-3-methyl-2-oxopentanoate + H2O. The protein operates within amino-acid biosynthesis; L-isoleucine biosynthesis; L-isoleucine from 2-oxobutanoate: step 3/4. Its pathway is amino-acid biosynthesis; L-valine biosynthesis; L-valine from pyruvate: step 3/4. Its function is as follows. Functions in the biosynthesis of branched-chain amino acids. Catalyzes the dehydration of (2R,3R)-2,3-dihydroxy-3-methylpentanoate (2,3-dihydroxy-3-methylvalerate) into 2-oxo-3-methylpentanoate (2-oxo-3-methylvalerate) and of (2R)-2,3-dihydroxy-3-methylbutanoate (2,3-dihydroxyisovalerate) into 2-oxo-3-methylbutanoate (2-oxoisovalerate), the penultimate precursor to L-isoleucine and L-valine, respectively. This chain is Dihydroxy-acid dehydratase, found in Chloroflexus aurantiacus (strain ATCC 29366 / DSM 635 / J-10-fl).